A 388-amino-acid chain; its full sequence is Succinate--CoA ligase [ADP-forming] subunit beta (388 aa).

Positions 9–244 (KDLLVSYDIA…PSQENVRDVL (236 aa)) constitute an ATP-grasp domain. Residues Lys-46, 53 to 55 (GRG), Val-102, and Glu-107 contribute to the ATP site. 2 residues coordinate Mg(2+): Asn-199 and Asp-213. Residues Asn-264 and 321–323 (GIM) each bind substrate.

Belongs to the succinate/malate CoA ligase beta subunit family. In terms of assembly, heterotetramer of two alpha and two beta subunits. The cofactor is Mg(2+).

It carries out the reaction succinate + ATP + CoA = succinyl-CoA + ADP + phosphate. The catalysed reaction is GTP + succinate + CoA = succinyl-CoA + GDP + phosphate. The protein operates within carbohydrate metabolism; tricarboxylic acid cycle; succinate from succinyl-CoA (ligase route): step 1/1. Functionally, succinyl-CoA synthetase functions in the citric acid cycle (TCA), coupling the hydrolysis of succinyl-CoA to the synthesis of either ATP or GTP and thus represents the only step of substrate-level phosphorylation in the TCA. The beta subunit provides nucleotide specificity of the enzyme and binds the substrate succinate, while the binding sites for coenzyme A and phosphate are found in the alpha subunit. The protein is Succinate--CoA ligase [ADP-forming] subunit beta of Chlamydia caviae (strain ATCC VR-813 / DSM 19441 / 03DC25 / GPIC) (Chlamydophila caviae).